Consider the following 165-residue polypeptide: MRIDTSALCDIYSDQVDVVEPIFSSFGGASSFYGKITTVKCFENNGLIAEVLEEEGEGRVLLIDGGGAVRRALIDAELAKLAVDNGWQGIIVYGAVRQLDVLETLDIGIHALAPIPVGAEDADIGEVDTPVNFGGVTFFPEDYVYADLTGIILSPELLDLNELAE.

It belongs to the RraA family. Homotrimer. Binds to both RNA-binding sites in the C-terminal region of Rne and to RhlB.

Its subcellular location is the cytoplasm. Functionally, globally modulates RNA abundance by binding to RNase E (Rne) and regulating its endonucleolytic activity. Can modulate Rne action in a substrate-dependent manner by altering the composition of the degradosome. Modulates RNA-binding and helicase activities of the degradosome. The sequence is that of Regulator of ribonuclease activity A from Haemophilus ducreyi (strain 35000HP / ATCC 700724).